The sequence spans 705 residues: Choline transporter-like protein 2 (705 aa).

Topologically, residues 1–33 are cytoplasmic; sequence MGKDSQHYYGKHGTPQKYDPTFKGPIYNRGCTD. Threonine 14 bears the Phosphothreonine mark. The chain crosses the membrane as a helical span at residues 34-54; the sequence is IICCVLLFLAIVGYVAVGIIA. The Extracellular portion of the chain corresponds to 55–232; that stretch reads WTHGDPRKVI…QIFEDYTVSW (178 aa). N-linked (GlcNAc...) asparagine glycans are attached at residues asparagine 187 and asparagine 200. Residues 233-253 traverse the membrane as a helical segment; the sequence is YWIVIGLVIAMLLSLMFIVLL. The Cytoplasmic segment spans residues 254-256; that stretch reads RFL. Residues 257–277 traverse the membrane as a helical segment; it reads AGVMVWVMIVMVILVLGYGIF. Topologically, residues 278–315 are extracellular; it reads HCYAEYSRLRGEAGSDVSLVDLGFQTDLRVYLHLRQTW. A helical transmembrane segment spans residues 316-336; it reads MAFMIILSILEVVIILLLIFL. Residues 337–364 lie on the Cytoplasmic side of the membrane; sequence RKRILIAIALIKEASRAVGHVMCSMLYP. The helical transmembrane segment at 365-385 threads the bilayer; sequence LVTFFLLCLCIAYWASTSVFL. Topologically, residues 386-453 are extracellular; the sequence is STSNVAVYKI…LQIFNAFMFF (68 aa). A glycan (N-linked (GlcNAc...) asparagine) is linked at asparagine 416. The chain crosses the membrane as a helical span at residues 454 to 476; it reads WLANFVLALGQVTLAGAFASYYW. Topologically, residues 477–503 are cytoplasmic; it reads AMRKPDDMPAFPLFSAFGRALRYHTGS. Residues 504-524 traverse the membrane as a helical segment; that stretch reads LAFGSLILAIVQIIRVMLEYL. Residues 525-562 are Extracellular-facing; sequence DQRLKAAQNKFAKFLMVCLKCCFWCLEKFIKFLNRNAY. The chain crosses the membrane as a helical span at residues 563–583; sequence IMIAIYGTNFCTSARNAFFLL. The Cytoplasmic segment spans residues 584–598; sequence MRNIIRVAVLDKVTD. A helical transmembrane segment spans residues 599–619; that stretch reads FLFLLGKLLIVGSVGILAFFF. Residues 620–637 are Extracellular-facing; the sequence is FTHRIRIVQDTAPPLNYY. A helical membrane pass occupies residues 638–658; that stretch reads WVPILTVIIGSYLIAHGFFSV. Topologically, residues 659-705 are cytoplasmic; it reads YGMCVDTLFLCFLEDLERNDGSAERPYFMSSTLKKLLNKTNKKVAES.

The protein belongs to the CTL (choline transporter-like) family. As to quaternary structure, interacts with COCH. N-glycosylated.

The protein localises to the cell membrane. It is found in the mitochondrion outer membrane. The enzyme catalyses choline(out) + n H(+)(in) = choline(in) + n H(+)(out). It catalyses the reaction ethanolamine(out) + n H(+)(in) = ethanolamine(in) + n H(+)(out). Functionally, exhibits choline transporter activity, as choline/H+ antiporter. Also acts as a low-affinity ethanolamine/H+ antiporter, regulating the supply of extracellular ethanolamine (Etn) for the CDP-Etn pathway, redistribute intracellular Etn and balance the CDP-Cho and CDP-Etn arms of the Kennedy pathway. The chain is Choline transporter-like protein 2 (Slc44a2) from Rattus norvegicus (Rat).